The following is a 476-amino-acid chain: Siroheme synthase (476 aa).

The precorrin-2 dehydrogenase /sirohydrochlorin ferrochelatase stretch occupies residues methionine 1 to leucine 207. NAD(+)-binding positions include lysine 25–valine 26 and proline 46–serine 47. The residue at position 132 (serine 132) is a Phosphoserine. A uroporphyrinogen-III C-methyltransferase region spans residues glycine 220–leucine 476. Aspartate 252 functions as the Proton acceptor in the catalytic mechanism. Lysine 274 (proton donor) is an active-site residue. Residues glycine 305 to aspartate 307, valine 310, threonine 335 to alanine 336, methionine 387, and glycine 416 contribute to the S-adenosyl-L-methionine site.

The protein in the N-terminal section; belongs to the precorrin-2 dehydrogenase / sirohydrochlorin ferrochelatase family. In the C-terminal section; belongs to the precorrin methyltransferase family.

The catalysed reaction is uroporphyrinogen III + 2 S-adenosyl-L-methionine = precorrin-2 + 2 S-adenosyl-L-homocysteine + H(+). The enzyme catalyses precorrin-2 + NAD(+) = sirohydrochlorin + NADH + 2 H(+). It catalyses the reaction siroheme + 2 H(+) = sirohydrochlorin + Fe(2+). It functions in the pathway cofactor biosynthesis; adenosylcobalamin biosynthesis; precorrin-2 from uroporphyrinogen III: step 1/1. Its pathway is cofactor biosynthesis; adenosylcobalamin biosynthesis; sirohydrochlorin from precorrin-2: step 1/1. The protein operates within porphyrin-containing compound metabolism; siroheme biosynthesis; precorrin-2 from uroporphyrinogen III: step 1/1. It participates in porphyrin-containing compound metabolism; siroheme biosynthesis; siroheme from sirohydrochlorin: step 1/1. It functions in the pathway porphyrin-containing compound metabolism; siroheme biosynthesis; sirohydrochlorin from precorrin-2: step 1/1. Functionally, multifunctional enzyme that catalyzes the SAM-dependent methylations of uroporphyrinogen III at position C-2 and C-7 to form precorrin-2 via precorrin-1. Then it catalyzes the NAD-dependent ring dehydrogenation of precorrin-2 to yield sirohydrochlorin. Finally, it catalyzes the ferrochelation of sirohydrochlorin to yield siroheme. This chain is Siroheme synthase, found in Xylella fastidiosa (strain M12).